The chain runs to 226 residues: Ribonuclease 3 (226 aa).

Residues 7 to 129 (LPRLCRTLGY…IIGAVYLDSD (123 aa)) enclose the RNase III domain. Glu-42 is a Mg(2+) binding site. Asp-46 is a catalytic residue. Mg(2+) is bound by residues Asp-115 and Glu-118. Glu-118 is a catalytic residue. One can recognise a DRBM domain in the interval 156-226 (DAKTLLQEHL…AAQVLELLKK (71 aa)).

Belongs to the ribonuclease III family. As to quaternary structure, homodimer. The cofactor is Mg(2+).

It localises to the cytoplasm. The enzyme catalyses Endonucleolytic cleavage to 5'-phosphomonoester.. Its function is as follows. Digests double-stranded RNA. Involved in the processing of primary rRNA transcript to yield the immediate precursors to the large and small rRNAs (23S and 16S). Processes some mRNAs, and tRNAs when they are encoded in the rRNA operon. Processes pre-crRNA and tracrRNA of type II CRISPR loci if present in the organism. In Shewanella baltica (strain OS185), this protein is Ribonuclease 3.